The chain runs to 541 residues: Phosphoenolpyruvate carboxykinase (ATP) (541 aa).

243–250 serves as a coordination point for ATP; that stretch reads GLSGTGKT.

Belongs to the phosphoenolpyruvate carboxykinase (ATP) family.

It catalyses the reaction oxaloacetate + ATP = phosphoenolpyruvate + ADP + CO2. It functions in the pathway carbohydrate biosynthesis; gluconeogenesis. This is Phosphoenolpyruvate carboxykinase (ATP) (PCK1) from Eremothecium gossypii (strain ATCC 10895 / CBS 109.51 / FGSC 9923 / NRRL Y-1056) (Yeast).